Reading from the N-terminus, the 157-residue chain is DNA gyrase inhibitor (157 aa).

The protein belongs to the DNA gyrase inhibitor family. In terms of assembly, interacts with DNA gyrase.

It localises to the cytoplasm. Functionally, inhibits the supercoiling activity of DNA gyrase. Acts by inhibiting DNA gyrase at an early step, prior to (or at the step of) binding of DNA by the gyrase. It protects cells against toxins that target DNA gyrase, by inhibiting activity of these toxins and reducing the formation of lethal double-strand breaks in the cell. The polypeptide is DNA gyrase inhibitor (Klebsiella pneumoniae (strain 342)).